A 289-amino-acid polypeptide reads, in one-letter code: MIRDQAKTPGRAKSAAAAKASPAAKGGGNEAAQSAAGKAAAKPAAKPATSKSGKGVIAVAPPSFRRERALLKQGIWPVAGCDEAGRGPLAGPVVAAAVILDPNRIPKGLDDSKRLSAEQREALFDKICKTSAFAVAFASPARIDRDNILRASLWALSRAVRALPEAPKHVFVDGRDRIDVDCHCEAVIGGDGLVMSIAAASIVAKVTRDRLMCALAQDCPGYGFEQHKGYGVPEHLAALDRLGPSVHHRSLFAPVVAARRKHQPWADVPEPDLFADVTVVTSSEIALGA.

A disordered region spans residues 1–55; sequence MIRDQAKTPGRAKSAAAAKASPAAKGGGNEAAQSAAGKAAAKPAAKPATSKSGKG. 2 stretches are compositionally biased toward low complexity: residues 7-24 and 31-55; these read KTPG…SPAA and AAQS…SGKG. The region spanning 76–264 is the RNase H type-2 domain; sequence WPVAGCDEAG…VVAARRKHQP (189 aa). A divalent metal cation contacts are provided by aspartate 82, glutamate 83, and aspartate 173.

The protein belongs to the RNase HII family. Mn(2+) is required as a cofactor. It depends on Mg(2+) as a cofactor.

It localises to the cytoplasm. It catalyses the reaction Endonucleolytic cleavage to 5'-phosphomonoester.. Functionally, endonuclease that specifically degrades the RNA of RNA-DNA hybrids. The sequence is that of Ribonuclease HII from Bradyrhizobium sp. (strain BTAi1 / ATCC BAA-1182).